The sequence spans 192 residues: Peptidyl-tRNA hydrolase (192 aa).

Histidine 17 is a tRNA binding site. Histidine 22 (proton acceptor) is an active-site residue. TRNA contacts are provided by phenylalanine 68, asparagine 70, and asparagine 116.

It belongs to the PTH family. Monomer.

The protein resides in the cytoplasm. It catalyses the reaction an N-acyl-L-alpha-aminoacyl-tRNA + H2O = an N-acyl-L-amino acid + a tRNA + H(+). Functionally, hydrolyzes ribosome-free peptidyl-tRNAs (with 1 or more amino acids incorporated), which drop off the ribosome during protein synthesis, or as a result of ribosome stalling. Its function is as follows. Catalyzes the release of premature peptidyl moieties from peptidyl-tRNA molecules trapped in stalled 50S ribosomal subunits, and thus maintains levels of free tRNAs and 50S ribosomes. The polypeptide is Peptidyl-tRNA hydrolase (Stenotrophomonas maltophilia (strain R551-3)).